A 110-amino-acid chain; its full sequence is Thioredoxin (110 aa).

Residues 2 to 110 enclose the Thioredoxin domain; sequence SALLVEIDKD…IDAMIAKHVG (109 aa). An intrachain disulfide couples Cys33 to Cys36.

The protein belongs to the thioredoxin family.

In terms of biological role, participates in various redox reactions through the reversible oxidation of its active center dithiol to a disulfide and catalyzes dithiol-disulfide exchange reactions. The protein is Thioredoxin (trxA) of Peptoclostridium acidaminophilum (Eubacterium acidaminophilum).